The following is a 247-amino-acid chain: tRNA (guanine-N(1)-)-methyltransferase (247 aa).

S-adenosyl-L-methionine-binding positions include Gly-115 and 135–140 (IGDYVL).

The protein belongs to the RNA methyltransferase TrmD family. In terms of assembly, homodimer.

The protein resides in the cytoplasm. The catalysed reaction is guanosine(37) in tRNA + S-adenosyl-L-methionine = N(1)-methylguanosine(37) in tRNA + S-adenosyl-L-homocysteine + H(+). In terms of biological role, specifically methylates guanosine-37 in various tRNAs. The protein is tRNA (guanine-N(1)-)-methyltransferase of Alkaliphilus metalliredigens (strain QYMF).